Consider the following 287-residue polypeptide: Bifunctional protein FolD (287 aa).

NADP(+) contacts are provided by residues 160–162 (GRS), Ser189, and Thr230.

Belongs to the tetrahydrofolate dehydrogenase/cyclohydrolase family. As to quaternary structure, homodimer.

The enzyme catalyses (6R)-5,10-methylene-5,6,7,8-tetrahydrofolate + NADP(+) = (6R)-5,10-methenyltetrahydrofolate + NADPH. It carries out the reaction (6R)-5,10-methenyltetrahydrofolate + H2O = (6R)-10-formyltetrahydrofolate + H(+). It participates in one-carbon metabolism; tetrahydrofolate interconversion. Its function is as follows. Catalyzes the oxidation of 5,10-methylenetetrahydrofolate to 5,10-methenyltetrahydrofolate and then the hydrolysis of 5,10-methenyltetrahydrofolate to 10-formyltetrahydrofolate. This chain is Bifunctional protein FolD, found in Chlamydia caviae (strain ATCC VR-813 / DSM 19441 / 03DC25 / GPIC) (Chlamydophila caviae).